The primary structure comprises 2517 residues: Serine/threonine-protein kinase ATR (2517 aa).

The stretch at 1178 to 1214 (EPMLEQIVNVLMAGCQHDDSQLQMASAKCLGELGAID) is one HEAT repeat. One can recognise an FAT domain in the interval 1509-2066 (LVSRASYNCG…LWMLLPHFKS (558 aa)). S1569 bears the Phosphoserine mark. At Y1570 the chain carries Phosphotyrosine. S1573 carries the phosphoserine modification. T1575 bears the Phosphothreonine mark. The PI3K/PI4K catalytic domain occupies 2184–2508 (FQESVLILRS…EATKVDNLAS (325 aa)). The interval 2190 to 2196 (ILRSAAK) is G-loop. The interval 2360–2368 (GLGDRHGEN) is catalytic loop. An activation loop region spans residues 2380 to 2404 (HVDFNCLFNQGELLPYPEVVPFRLT). An FATC domain is found at 2485-2517 (IPLSTEGQVNFLINEATKVDNLASMYIGWGAFL).

This sequence belongs to the PI3/PI4-kinase family. ATM subfamily. In terms of assembly, interacts with mus304. Mn(2+) serves as cofactor.

The protein resides in the nucleus. It catalyses the reaction L-seryl-[protein] + ATP = O-phospho-L-seryl-[protein] + ADP + H(+). It carries out the reaction L-threonyl-[protein] + ATP = O-phospho-L-threonyl-[protein] + ADP + H(+). In terms of biological role, serine/threonine protein kinase which activates checkpoint signaling upon genotoxic stresses such as ionizing radiation (IR), ultraviolet light (UV), or DNA replication stalling, thereby acting as a DNA damage sensor. Recognizes the substrate consensus sequence [ST]-Q. Phosphorylates various proteins, which collectively inhibits DNA replication and mitosis and promotes DNA repair and recombination. Phosphorylates grp/CHK1. Phosphorylates 'Ser-137' of histone variant H2AX/H2AV at sites of DNA damage, thereby regulating DNA damage response mechanism. Essential for the DNA damage checkpoint in larval imaginal disks and neuroblasts and for the DNA replication checkpoint in the embryo. Also has an essential role during early nuclear divisions in embryos, where it is required to delay mitosis in response to incomplete DNA replication. Also plays an important role during meiosis, where it may monitor double-strand-break repair during meiotic crossing over, to regulate the progression of prophase I, and to enforce metaphase I delay observed at the end of oogenesis. Involved in telomere maintenance and prevention of telomere fusion; potentially functioning downstream of moi/modigliani. This chain is Serine/threonine-protein kinase ATR (mei-41), found in Drosophila melanogaster (Fruit fly).